Reading from the N-terminus, the 204-residue chain is Small ribosomal subunit protein uS4 (204 aa).

The S4 RNA-binding domain maps to 93 to 156 (SRLSSVLYHS…AKIPILIEAE (64 aa)).

It belongs to the universal ribosomal protein uS4 family. In terms of assembly, part of the 30S ribosomal subunit. Contacts protein S5. The interaction surface between S4 and S5 is involved in control of translational fidelity.

Functionally, one of the primary rRNA binding proteins, it binds directly to 16S rRNA where it nucleates assembly of the body of the 30S subunit. In terms of biological role, with S5 and S12 plays an important role in translational accuracy. This chain is Small ribosomal subunit protein uS4, found in Wolbachia pipientis subsp. Culex pipiens (strain wPip).